Consider the following 187-residue polypeptide: UPF0340 protein SPJ_0612 (187 aa).

It belongs to the UPF0340 family.

The polypeptide is UPF0340 protein SPJ_0612 (Streptococcus pneumoniae (strain JJA)).